A 224-amino-acid polypeptide reads, in one-letter code: Orotidine 5'-phosphate decarboxylase (224 aa).

Substrate-binding positions include Asp-10, Lys-32, 59–68 (DLKLHDIPNT), Thr-115, Arg-175, Gln-184, Gly-204, and Arg-205. The active-site Proton donor is Lys-61.

The protein belongs to the OMP decarboxylase family. Type 1 subfamily. In terms of assembly, homodimer.

The catalysed reaction is orotidine 5'-phosphate + H(+) = UMP + CO2. It functions in the pathway pyrimidine metabolism; UMP biosynthesis via de novo pathway; UMP from orotate: step 2/2. In terms of biological role, catalyzes the decarboxylation of orotidine 5'-monophosphate (OMP) to uridine 5'-monophosphate (UMP). The chain is Orotidine 5'-phosphate decarboxylase from Novosphingobium aromaticivorans (strain ATCC 700278 / DSM 12444 / CCUG 56034 / CIP 105152 / NBRC 16084 / F199).